The chain runs to 286 residues: Neuferricin homolog (286 aa).

The first 23 residues, 1-23 (MFGFVKYLFKLQFLFILAAVLAG), serve as a signal peptide directing secretion. The Cytochrome b5 heme-binding domain occupies 61 to 145 (ATVLTSAELS…KPNDLLGLAN (85 aa)). Residues 176–200 (HKYLALLEQAQIAKAEVDELRSKYP) adopt a coiled-coil conformation.

This sequence belongs to the cytochrome b5 family. MAPR subfamily.

It is found in the secreted. Functionally, heme-binding protein. The sequence is that of Neuferricin homolog from Drosophila pseudoobscura pseudoobscura (Fruit fly).